A 198-amino-acid chain; its full sequence is Recombination protein RecR (198 aa).

Residues 57-72 (CSVCGHITDTDPCYIC) form a C4-type zinc finger. Positions 80-175 (SMICVVEETK…KVTRLAHGLP (96 aa)) constitute a Toprim domain.

It belongs to the RecR family.

Its function is as follows. May play a role in DNA repair. It seems to be involved in an RecBC-independent recombinational process of DNA repair. It may act with RecF and RecO. The protein is Recombination protein RecR of Macrococcus caseolyticus (strain JCSC5402) (Macrococcoides caseolyticum).